Consider the following 430-residue polypeptide: Adenylosuccinate synthetase (430 aa).

GTP-binding positions include 12–18 (GDEGKGK) and 40–42 (GHT). The active-site Proton acceptor is D13. The Mg(2+) site is built by D13 and G40. IMP is bound by residues 13–16 (DEGK), 38–41 (NAGH), T128, R142, Q223, T238, and R302. H41 serves as the catalytic Proton donor. A substrate-binding site is contributed by 298 to 304 (TTTGRPR). Residues R304, 330–332 (LLD), and 412–414 (SVG) contribute to the GTP site.

This sequence belongs to the adenylosuccinate synthetase family. As to quaternary structure, homodimer. Mg(2+) serves as cofactor.

The protein localises to the cytoplasm. It carries out the reaction IMP + L-aspartate + GTP = N(6)-(1,2-dicarboxyethyl)-AMP + GDP + phosphate + 2 H(+). It participates in purine metabolism; AMP biosynthesis via de novo pathway; AMP from IMP: step 1/2. In terms of biological role, plays an important role in the de novo pathway of purine nucleotide biosynthesis. Catalyzes the first committed step in the biosynthesis of AMP from IMP. In Listeria monocytogenes serotype 4b (strain CLIP80459), this protein is Adenylosuccinate synthetase.